The following is a 947-amino-acid chain: Bifunctional glutamine synthetase adenylyltransferase/adenylyl-removing enzyme (947 aa).

The adenylyl removase stretch occupies residues 1-440 (MTPLSSPLSQ…VFNELIGDDE (440 aa)). Positions 450-947 (SEPWREVWQD…ASWRKWLVAV (498 aa)) are adenylyl transferase.

It belongs to the GlnE family. Mg(2+) serves as cofactor.

The enzyme catalyses [glutamine synthetase]-O(4)-(5'-adenylyl)-L-tyrosine + phosphate = [glutamine synthetase]-L-tyrosine + ADP. It catalyses the reaction [glutamine synthetase]-L-tyrosine + ATP = [glutamine synthetase]-O(4)-(5'-adenylyl)-L-tyrosine + diphosphate. In terms of biological role, involved in the regulation of glutamine synthetase GlnA, a key enzyme in the process to assimilate ammonia. When cellular nitrogen levels are high, the C-terminal adenylyl transferase (AT) inactivates GlnA by covalent transfer of an adenylyl group from ATP to specific tyrosine residue of GlnA, thus reducing its activity. Conversely, when nitrogen levels are low, the N-terminal adenylyl removase (AR) activates GlnA by removing the adenylyl group by phosphorolysis, increasing its activity. The regulatory region of GlnE binds the signal transduction protein PII (GlnB) which indicates the nitrogen status of the cell. The polypeptide is Bifunctional glutamine synthetase adenylyltransferase/adenylyl-removing enzyme (Salmonella agona (strain SL483)).